We begin with the raw amino-acid sequence, 191 residues long: Dephospho-CoA kinase (191 aa).

The DPCK domain occupies 3–191 (AIGITGSYAS…NLIANLECRV (189 aa)). 11–16 (ASGKTF) contacts ATP.

This sequence belongs to the CoaE family.

The protein localises to the cytoplasm. The enzyme catalyses 3'-dephospho-CoA + ATP = ADP + CoA + H(+). It participates in cofactor biosynthesis; coenzyme A biosynthesis; CoA from (R)-pantothenate: step 5/5. In terms of biological role, catalyzes the phosphorylation of the 3'-hydroxyl group of dephosphocoenzyme A to form coenzyme A. This Rickettsia bellii (strain RML369-C) protein is Dephospho-CoA kinase.